The primary structure comprises 233 residues: uncharacterized protein (233 aa).

This is an uncharacterized protein from Methanocaldococcus jannaschii (strain ATCC 43067 / DSM 2661 / JAL-1 / JCM 10045 / NBRC 100440) (Methanococcus jannaschii).